A 177-amino-acid chain; its full sequence is Adenine phosphoribosyltransferase (177 aa).

This sequence belongs to the purine/pyrimidine phosphoribosyltransferase family. As to quaternary structure, homodimer.

The protein resides in the cytoplasm. The enzyme catalyses AMP + diphosphate = 5-phospho-alpha-D-ribose 1-diphosphate + adenine. Its pathway is purine metabolism; AMP biosynthesis via salvage pathway; AMP from adenine: step 1/1. Its function is as follows. Catalyzes a salvage reaction resulting in the formation of AMP, that is energically less costly than de novo synthesis. The polypeptide is Adenine phosphoribosyltransferase (Leptospira interrogans serogroup Icterohaemorrhagiae serovar copenhageni (strain Fiocruz L1-130)).